The following is a 403-amino-acid chain: Sulfate adenylyltransferase (403 aa).

This sequence belongs to the sulfate adenylyltransferase family.

It catalyses the reaction sulfate + ATP + H(+) = adenosine 5'-phosphosulfate + diphosphate. It functions in the pathway sulfur metabolism; hydrogen sulfide biosynthesis; sulfite from sulfate: step 1/3. The protein is Sulfate adenylyltransferase of Pelodictyon phaeoclathratiforme (strain DSM 5477 / BU-1).